The sequence spans 1094 residues: Probable arabinosyltransferase C (1094 aa).

Transmembrane regions (helical) follow at residues I28–L50, A232–L251, P264–F286, S341–S360, T373–L392, I431–I453, R466–F488, S530–L552, S565–T582, W586–V608, T620–Y642, W657–F679, and L700–S722. Residues G817–G831 show a composition bias toward low complexity. A disordered region spans residues G817–R836.

Belongs to the emb family.

Its subcellular location is the cell membrane. Functionally, arabinosyl transferase responsible for the polymerization of arabinose into the arabinan of arabinogalactan. This Mycobacterium tuberculosis (strain ATCC 25618 / H37Rv) protein is Probable arabinosyltransferase C (embC).